We begin with the raw amino-acid sequence, 152 residues long: Putative NrdI-like protein (152 aa).

It belongs to the NrdI family.

This is Putative NrdI-like protein from Streptococcus pyogenes serotype M18 (strain MGAS8232).